A 356-amino-acid polypeptide reads, in one-letter code: A-type ATP synthase subunit C (356 aa).

Belongs to the V-ATPase V0D/AC39 subunit family. As to quaternary structure, has multiple subunits with at least A(3), B(3), C, D, E, F, H, I and proteolipid K(x).

Its subcellular location is the cell membrane. Functionally, component of the A-type ATP synthase that produces ATP from ADP in the presence of a proton gradient across the membrane. This chain is A-type ATP synthase subunit C, found in Thermoplasma volcanium (strain ATCC 51530 / DSM 4299 / JCM 9571 / NBRC 15438 / GSS1).